Consider the following 1085-residue polypeptide: Translation factor GUF1 homolog, mitochondrial (1085 aa).

In terms of domain architecture, tr-type G spans 232–409 (KYIRNFCILA…RIISDIPPPI (178 aa)). GTP is bound by residues 241 to 248 (AHIDSGKS), 302 to 306 (DTPGH), and 356 to 359 (NKID).

This sequence belongs to the TRAFAC class translation factor GTPase superfamily. Classic translation factor GTPase family. LepA subfamily.

The protein localises to the mitochondrion inner membrane. It catalyses the reaction GTP + H2O = GDP + phosphate + H(+). Functionally, promotes mitochondrial protein synthesis. May act as a fidelity factor of the translation reaction, by catalyzing a one-codon backward translocation of tRNAs on improperly translocated ribosomes. Binds to mitochondrial ribosomes in a GTP-dependent manner. In Plasmodium falciparum (isolate 3D7), this protein is Translation factor GUF1 homolog, mitochondrial.